A 98-amino-acid polypeptide reads, in one-letter code: NADH-ubiquinone oxidoreductase chain 4L (98 aa).

3 consecutive transmembrane segments (helical) span residues 1–21 (MAPI…GVLI), 28–48 (STLL…TLLI), and 59–79 (APLI…ALLV).

Belongs to the complex I subunit 4L family. Core subunit of respiratory chain NADH dehydrogenase (Complex I) which is composed of 45 different subunits.

It is found in the mitochondrion inner membrane. The catalysed reaction is a ubiquinone + NADH + 5 H(+)(in) = a ubiquinol + NAD(+) + 4 H(+)(out). Functionally, core subunit of the mitochondrial membrane respiratory chain NADH dehydrogenase (Complex I) which catalyzes electron transfer from NADH through the respiratory chain, using ubiquinone as an electron acceptor. Part of the enzyme membrane arm which is embedded in the lipid bilayer and involved in proton translocation. The chain is NADH-ubiquinone oxidoreductase chain 4L (MT-ND4L) from Isoodon macrourus (Short-nosed bandicoot).